Here is a 785-residue protein sequence, read N- to C-terminus: Formin-like protein 3 (785 aa).

The first 20 residues, 1–20, serve as a signal peptide directing secretion; that stretch reads MGRLRLAFLAISLVVFVCVS. Residues 96–145 are disordered; sequence YDWLAPASSPNEPPAETPDESSPSPSEETPSVVAPSQSVPGPPRPPPQRE. The segment covering 115-134 has biased composition (low complexity); the sequence is ESSPSPSEETPSVVAPSQSV. Residues 154 to 174 form a helical membrane-spanning segment; the sequence is LIIAVASTAVLTFVFVALMFL. Disordered stretches follow at residues 184–228, 241–329, and 730–785; these read AVGS…KKRS, EFST…APKT, and ETTK…SSPS. Residues 201 to 223 show a composition bias toward polar residues; sequence STGSTENSPTVASTSRKMFSVAS. Residues 256–303 show a composition bias toward pro residues; that stretch reads LKLPPGRSAPPPPPAAAPPPQPPPPPPPKPQPPPPPKIARPPPAPPKG. The FH2 domain maps to 321–747; it reads DSETGAPKTK…SGKKESEMTT (427 aa). Residues 745–754 show a composition bias toward polar residues; that stretch reads MTTSDSNQPS. Positions 773–785 are enriched in acidic residues; it reads SDDSDDEEDSSPS.

This sequence belongs to the formin-like family. Class-I subfamily.

Its subcellular location is the membrane. Acts as actin nucleation factor that directs the formation of actin cables and polarized growth in pollen tubes. The protein is Formin-like protein 3 (FH3) of Arabidopsis thaliana (Mouse-ear cress).